The following is a 290-amino-acid chain: Glycine--tRNA ligase alpha subunit (290 aa).

The protein belongs to the class-II aminoacyl-tRNA synthetase family. Tetramer of two alpha and two beta subunits.

Its subcellular location is the cytoplasm. The enzyme catalyses tRNA(Gly) + glycine + ATP = glycyl-tRNA(Gly) + AMP + diphosphate. The chain is Glycine--tRNA ligase alpha subunit from Prochlorococcus marinus (strain NATL2A).